The sequence spans 278 residues: 4-diphosphocytidyl-2-C-methyl-D-erythritol kinase (278 aa).

The active site involves Lys9. An ATP-binding site is contributed by 89 to 99 (PVASGIGGGSA). Asp128 is a catalytic residue.

This sequence belongs to the GHMP kinase family. IspE subfamily.

It catalyses the reaction 4-CDP-2-C-methyl-D-erythritol + ATP = 4-CDP-2-C-methyl-D-erythritol 2-phosphate + ADP + H(+). It participates in isoprenoid biosynthesis; isopentenyl diphosphate biosynthesis via DXP pathway; isopentenyl diphosphate from 1-deoxy-D-xylulose 5-phosphate: step 3/6. Functionally, catalyzes the phosphorylation of the position 2 hydroxy group of 4-diphosphocytidyl-2C-methyl-D-erythritol. The chain is 4-diphosphocytidyl-2-C-methyl-D-erythritol kinase from Cereibacter sphaeroides (strain ATCC 17025 / ATH 2.4.3) (Rhodobacter sphaeroides).